Here is a 261-residue protein sequence, read N- to C-terminus: 14-3-3-like protein A (261 aa).

This sequence belongs to the 14-3-3 family.

The protein is 14-3-3-like protein A of Vicia faba (Broad bean).